A 675-amino-acid chain; its full sequence is MDRHALGGGGALEIEKTPEAAEDMESEPALAAAREAERVPPWREQVTARGMVAALLIGVVYTVIVMKLSLTTGLIPTLNVSAALLAFLALRGWTHALDRLGIASRPFTRQENTVIQTCAVACYTIGYGGGFGSFLLGLNKKTYELSGASTPGNVPGSYKEPGIGWMTGFLLSTSFVGLLTLLPLRKVLVIDYKLTYPSGTATAVLINGFHTPQGDKNAKKQVRGFLRYFGISFLWSFFQWFYTGGDVCGFLQFPTFGLKAWKHTFFFDFSLTYVGAGMICSHLVNLSLLFGAILSWGIMWPLIGKQKGNWYSAKASESSMSGLFGYKSFICIALLVGDGFYNFVKVIVVTLKSVRERSRRRGLNNRVADADTMAIDDMQRNEVFNRDNIPTWMAYTGYTLLSVIAVVLIPVMFRQVKWYYVIIAYLLAPALGFCNAYGTGLTDMNMGYNYGKIALFIFAAWAGKDDGVVAGLVGCGLVKQLVLISADLMHDFKTGHLTLTSPRSMLVGQVVGTLMGCVVAPLTFFLFYKAFDVGDPNGYWKAPYALIYRNMAIIGVEGFSALPRHCLQLCAGFFAFAVLANLARDFLPRRYGRYMPLPMAMAVPFLVGASFAIDMCAGSLVVFLWHRFDGKRAALLVPAVASGLICGDGIWTFPSSLLALAKVKPPICMKFIPGN.

A compositionally biased stretch (gly residues) spans 1 to 11 (MDRHALGGGGA). Residues 1-20 (MDRHALGGGGALEIEKTPEA) are disordered. Transmembrane regions (helical) follow at residues 50–70 (GMVAALLIGVVYTVIVMKLSL), 73–93 (GLIPTLNVSAALLAFLALRGW), 118–138 (CAVACYTIGYGGGFGSFLLGL), 162–182 (GIGWMTGFLLSTSFVGLLTLL), 231–251 (ISFLWSFFQWFYTGGDVCGFL), 283–303 (LVNLSLLFGAILSWGIMWPLI), 329–349 (FICIALLVGDGFYNFVKVIVV), 393–413 (MAYTGYTLLSVIAVVLIPVMF), 421–441 (VIIAYLLAPALGFCNAYGTGL), 453–473 (IALFIFAAWAGKDDGVVAGLV), 507–527 (VGQVVGTLMGCVVAPLTFFLF), 567–587 (LQLCAGFFAFAVLANLARDFL), 605–625 (FLVGASFAIDMCAGSLVVFLW), and 633–653 (AALLVPAVASGLICGDGIWTF).

The protein belongs to the YSL (TC 2.A.67.2) family. In terms of tissue distribution, expressed in roots.

It localises to the membrane. In terms of biological role, may be involved in the transport of nicotianamine-chelated metals. This Oryza sativa subsp. japonica (Rice) protein is Probable metal-nicotianamine transporter YSL16 (YSL16).